A 305-amino-acid chain; its full sequence is Glycine--tRNA ligase alpha subunit (305 aa).

Belongs to the class-II aminoacyl-tRNA synthetase family. As to quaternary structure, tetramer of two alpha and two beta subunits.

It is found in the cytoplasm. It carries out the reaction tRNA(Gly) + glycine + ATP = glycyl-tRNA(Gly) + AMP + diphosphate. In Streptococcus suis (strain 05ZYH33), this protein is Glycine--tRNA ligase alpha subunit.